Reading from the N-terminus, the 298-residue chain is UDP-N-acetylenolpyruvoylglucosamine reductase (298 aa).

An FAD-binding PCMH-type domain is found at 27–191; it reads TGGEADVFVM…LDATFSLALE (165 aa). The active site involves Arg-170. Ser-220 serves as the catalytic Proton donor. Residue Glu-290 is part of the active site.

Belongs to the MurB family. FAD is required as a cofactor.

It is found in the cytoplasm. The catalysed reaction is UDP-N-acetyl-alpha-D-muramate + NADP(+) = UDP-N-acetyl-3-O-(1-carboxyvinyl)-alpha-D-glucosamine + NADPH + H(+). It functions in the pathway cell wall biogenesis; peptidoglycan biosynthesis. Cell wall formation. The polypeptide is UDP-N-acetylenolpyruvoylglucosamine reductase (Listeria monocytogenes serotype 4a (strain HCC23)).